Here is an 88-residue protein sequence, read N- to C-terminus: Large ribosomal subunit protein bL27 (88 aa).

The protein belongs to the bacterial ribosomal protein bL27 family.

This is Large ribosomal subunit protein bL27 from Acidobacterium capsulatum (strain ATCC 51196 / DSM 11244 / BCRC 80197 / JCM 7670 / NBRC 15755 / NCIMB 13165 / 161).